Reading from the N-terminus, the 95-residue chain is Basic phospholipase A2 (95 aa).

2 N6-palmitoyl lysine lipidation sites follow: lysine 7 and lysine 10. Residues tyrosine 23, glycine 25, and glycine 27 each coordinate Ca(2+). 5 disulfide bridges follow: cysteine 24–cysteine 40, cysteine 39–cysteine 77, cysteine 46–cysteine 70, cysteine 53–cysteine 63, and cysteine 57–cysteine 68. The active site involves histidine 43. Aspartate 44 is a binding site for Ca(2+). Residue aspartate 71 is part of the active site.

As to quaternary structure, monomer. Ca(2+) serves as cofactor. As to expression, expressed by the venom gland.

It localises to the secreted. The enzyme catalyses a 1,2-diacyl-sn-glycero-3-phosphocholine + H2O = a 1-acyl-sn-glycero-3-phosphocholine + a fatty acid + H(+). Functionally, PLA2 catalyzes the calcium-dependent hydrolysis of the 2-acyl groups in 3-sn-phosphoglycerides. Induces local and systemic myotoxicity in an intramuscular mouse model. Induces local edema in a mouse footpad assay. Does not exhibit any anticoagulant effects. Does not mediate an antibacterial effect against Gram-negative and Gram-positive bacteria. This is Basic phospholipase A2 from Agkistrodon piscivorus leucostoma (Western cottonmouth).